The primary structure comprises 145 residues: UPF0179 protein Msm_0285 (145 aa).

The protein belongs to the UPF0179 family.

This is UPF0179 protein Msm_0285 from Methanobrevibacter smithii (strain ATCC 35061 / DSM 861 / OCM 144 / PS).